Here is a 347-residue protein sequence, read N- to C-terminus: Suppressor of RNA-mediated gene silencing (347 aa).

This sequence belongs to the phytoreovirus non-structural protein 10 family.

Its function is as follows. Suppressor of RNA-mediated gene silencing, also known as post-transcriptional gene silencing (PTGS), a mechanism of plant viral defense that limits the accumulation of viral RNAs. This Catharanthus roseus (Madagascar periwinkle) protein is Suppressor of RNA-mediated gene silencing.